The chain runs to 320 residues: Glutathione synthetase (320 aa).

Residues 127–312 (KLAITEFPRF…VAGLMIDALE (186 aa)) enclose the ATP-grasp domain. 153–209 (LAEHEDIILKPLDGMGGAGIFRIQNTDHNIGVIIETLTRYGTRTIMAQRFLPEIREG) lines the ATP pocket. Positions 283 and 285 each coordinate Mg(2+).

It belongs to the prokaryotic GSH synthase family. Mg(2+) is required as a cofactor. It depends on Mn(2+) as a cofactor.

The enzyme catalyses gamma-L-glutamyl-L-cysteine + glycine + ATP = glutathione + ADP + phosphate + H(+). It functions in the pathway sulfur metabolism; glutathione biosynthesis; glutathione from L-cysteine and L-glutamate: step 2/2. The protein is Glutathione synthetase of Nitrosomonas europaea (strain ATCC 19718 / CIP 103999 / KCTC 2705 / NBRC 14298).